A 478-amino-acid polypeptide reads, in one-letter code: Antiviral innate immune response effector IFIT1 (478 aa).

TPR repeat units lie at residues 52–85 (VGIHNLLAYVKHLKGQNEEALKSLKEAEDLMQKE), 95–128 (LVTWSNFAWVYYHMGRLAEAQAYLDKVENICKKP), 139–174 (PEIDCEEGWALLKCGGKNYERAKACFEKALEGDHEN), 183–216 (ISAYRLDGFKLATKGYRQFSLLPLRQAVSLNPDN), 218–249 (YLKVLLALKLQDNGQEAEGEKYLEEALANMSS), and 251–284 (TYVFRYAAKFYRRKGSVDKALELLKKALQETPTS). Residue tryptophan 147 participates in mRNA binding. Glycine 190 contributes to the RNA binding site. RNA-binding residues include lysine 259, histidine 289, glutamine 290, and lysine 336. 4 TPR repeats span residues 305-339 (ATKGQPRGQNREKIDKMIRLAIFHFESAVENKPTF), 340-373 (EVAHLDLARMYIEAGNHRKAEETFQKLLCMKPVV), 378-412 (QDIHLQYARFQEFQKKSEINAIIHYLKAIKIEQTS), and 437-470 (LESLSLLGFVYKLKGNMNEALEYYERALRLAADF).

This sequence belongs to the IFIT family. Component of an interferon-dependent multiprotein complex, at least composed of IFIT1, IFIT2 and IFIT3. Interacts (via TPR repeats 1-4) with RPL15. Interacts with STING1/MITA; could disrupt STING1 interaction with MAVS or TBK1, acting as a negative-feedback regulator of virus-triggered signaling. Interacts with EIF3E; this could be an alternative way to inhibit translation. Phosphorylated. In terms of processing, ISGylated.

The protein localises to the cytoplasm. In terms of biological role, plays a key role in the innate immune response as part of an interferon-dependent multiprotein complex, recognizing and sequestering viral RNAs that lack host-specific 2'-O-methylation at their 5' cap. By distinguishing these RNAs from host mRNAs, inhibits their translation by competing with the translation initiation factor eIF4E. Could also prevent viral replication through its interaction with DNA replication origin-binding protein E1 of several viruses. Causes the translocation of E1 from the nucleus to the cytoplasm and can also inhibit its helicase activity in vitro. This Macaca fascicularis (Crab-eating macaque) protein is Antiviral innate immune response effector IFIT1.